The following is a 181-amino-acid chain: GTPase RhebL1 (181 aa).

Residues L30–T36, G61, N117–D120, and S147–A148 each bind GTP. The short motif at Y33–Y41 is the Effector region element. T36 lines the Mg(2+) pocket. C178 is modified (cysteine methyl ester). Residue C178 is the site of S-farnesyl cysteine attachment. Residues H179–M181 constitute a propeptide, removed in mature form.

The protein belongs to the small GTPase superfamily. Rheb family. Interacts with MTOR.

The protein resides in the endomembrane system. The protein localises to the cytoplasm. It carries out the reaction GTP + H2O = GDP + phosphate + H(+). Its function is as follows. Binds GTP and exhibits intrinsic GTPase activity. May activate NF-kappa-B-mediated gene transcription. Promotes signal transduction through MTOR, activates RPS6KB1, and is a downstream target of the small GTPase-activating proteins TSC1 and TSC2. This chain is GTPase RhebL1 (RHEBL1), found in Bos taurus (Bovine).